We begin with the raw amino-acid sequence, 259 residues long: AM-toxin biosynthesis protein 11 (259 aa).

The segment at 39–66 is disordered; sequence RRSRRRPEEESIQSLSKHVSTTTQPCPT. Positions 50–64 are enriched in polar residues; sequence IQSLSKHVSTTTQPC.

Its pathway is mycotoxin biosynthesis. In terms of biological role, part of the gene clusters that mediate the biosynthesis of AM-toxins, host-selective toxins (HSTs) causing Alternaria blotch on apple, a worldwide distributed disease. AM-toxins are cyclic depsipeptides containing the 3 residues 2-hydroxy-isovaleric acid (2-HIV), dehydroalanine, L-alanine which are common for all 3 AM-toxins I to III. The fourth precursor is L-alpha-amino-methoxyphenyl-valeric acid (L-Amv) for AM-toxin I, L-alpha-amino-phenyl-valeric acid (L-Apv) for AM-toxin II, and L-alpha-amino-hydroxyphenyl-valeric acid (L-Ahv) for AM-toxin III. AM-toxins have two target sites for affecting susceptible apple cells; they cause invagination of the plasma membrane and electrolyte loss and chloroplast disorganization. The non-ribosomal peptide synthetase AMT1 contains 4 catalytic modules and is responsible for activation of each residue in AM-toxin. The aldo-keto reductase AMT2 catalyzes the conversion of 2-keto-isovaleric acid (2-KIV) to 2-hydroxy-isovaleric acid (2-HIV), one of the precursor residues incorporated by AMT1 during AM-toxin biosynthesis, by reduction of its ketone to an alcohol. The cytochrome P450 monooxygenase AMT3 and the thioesterase AMT4 are also important for AM-toxin production, but their exact function within the AM-toxin biosynthesis are not known yet. Up to 21 proteins (including AMT1 to AMT4) are predicted to be involved in AM-toxin biosynthesis since their expression ishighly up-regulated in AM-toxin-producing cultures. The chain is AM-toxin biosynthesis protein 11 from Alternaria alternata (Alternaria rot fungus).